Reading from the N-terminus, the 118-residue chain is Large ribosomal subunit protein bL20 (118 aa).

The protein belongs to the bacterial ribosomal protein bL20 family.

Binds directly to 23S ribosomal RNA and is necessary for the in vitro assembly process of the 50S ribosomal subunit. It is not involved in the protein synthesizing functions of that subunit. The protein is Large ribosomal subunit protein bL20 of Agathobacter rectalis (strain ATCC 33656 / DSM 3377 / JCM 17463 / KCTC 5835 / VPI 0990) (Eubacterium rectale).